The following is a 156-amino-acid chain: Hydrogenase 3 maturation protease (156 aa).

Ni(2+) is bound by residues Asp16, Asp62, and His90.

This sequence belongs to the peptidase A31 family. In terms of assembly, monomer.

The enzyme catalyses This enzyme specifically removes a 32-amino acid peptide from the C-terminus of the precursor of the large subunit of E.coli hydrogenase 3 by cleavage at the C-terminal side of Arg-537.. Functionally, protease involved in the C-terminal processing of HycE, the large subunit of hydrogenase 3. This is Hydrogenase 3 maturation protease (hycI) from Escherichia coli O157:H7.